A 120-amino-acid polypeptide reads, in one-letter code: ATP-dependent Clp protease adapter protein ClpS (120 aa).

It belongs to the ClpS family. Binds to the N-terminal domain of the chaperone ClpA.

Functionally, involved in the modulation of the specificity of the ClpAP-mediated ATP-dependent protein degradation. This is ATP-dependent Clp protease adapter protein ClpS from Pseudomonas fluorescens (strain ATCC BAA-477 / NRRL B-23932 / Pf-5).